Reading from the N-terminus, the 199-residue chain is dITP/XTP pyrophosphatase (199 aa).

A substrate-binding site is contributed by 8-13; the sequence is SGNAGK. The active-site Proton acceptor is the Asp69. A Mg(2+)-binding site is contributed by Asp69. Substrate is bound by residues Ser70, 154–157, Lys177, and 182–183; these read FGYN and HR.

The protein belongs to the HAM1 NTPase family. As to quaternary structure, homodimer. It depends on Mg(2+) as a cofactor.

It catalyses the reaction XTP + H2O = XMP + diphosphate + H(+). It carries out the reaction dITP + H2O = dIMP + diphosphate + H(+). The catalysed reaction is ITP + H2O = IMP + diphosphate + H(+). In terms of biological role, pyrophosphatase that catalyzes the hydrolysis of nucleoside triphosphates to their monophosphate derivatives, with a high preference for the non-canonical purine nucleotides XTP (xanthosine triphosphate), dITP (deoxyinosine triphosphate) and ITP. Seems to function as a house-cleaning enzyme that removes non-canonical purine nucleotides from the nucleotide pool, thus preventing their incorporation into DNA/RNA and avoiding chromosomal lesions. The chain is dITP/XTP pyrophosphatase from Xanthomonas campestris pv. campestris (strain 8004).